A 355-amino-acid chain; its full sequence is Histidinol-phosphate aminotransferase (355 aa).

At Lys-222 the chain carries N6-(pyridoxal phosphate)lysine.

This sequence belongs to the class-II pyridoxal-phosphate-dependent aminotransferase family. Histidinol-phosphate aminotransferase subfamily. It depends on pyridoxal 5'-phosphate as a cofactor.

The enzyme catalyses L-histidinol phosphate + 2-oxoglutarate = 3-(imidazol-4-yl)-2-oxopropyl phosphate + L-glutamate. It participates in amino-acid biosynthesis; L-histidine biosynthesis; L-histidine from 5-phospho-alpha-D-ribose 1-diphosphate: step 7/9. This Natronomonas pharaonis (strain ATCC 35678 / DSM 2160 / CIP 103997 / JCM 8858 / NBRC 14720 / NCIMB 2260 / Gabara) (Halobacterium pharaonis) protein is Histidinol-phosphate aminotransferase.